Here is a 323-residue protein sequence, read N- to C-terminus: Pantothenate kinase (323 aa).

Residues 1 to 12 (MAEQNAASTTGV) are compositionally biased toward polar residues. A disordered region spans residues 1 to 24 (MAEQNAASTTGVKPSPRTPDFSPY). 108–115 (GSVAVGKS) serves as a coordination point for ATP.

It belongs to the prokaryotic pantothenate kinase family.

Its subcellular location is the cytoplasm. It catalyses the reaction (R)-pantothenate + ATP = (R)-4'-phosphopantothenate + ADP + H(+). Its pathway is cofactor biosynthesis; coenzyme A biosynthesis; CoA from (R)-pantothenate: step 1/5. This Corynebacterium glutamicum (strain R) protein is Pantothenate kinase.